A 383-amino-acid chain; its full sequence is Paralemmin-1 (383 aa).

Met-1 carries the post-translational modification N-acetylmethionine. Residues Ala-5 to Glu-102 are a coiled coil. Disordered stretches follow at residues Arg-51–Met-163, Thr-242–Pro-295, and Ala-334–Pro-375. The segment covering Asp-69–Asp-96 has biased composition (basic and acidic residues). Composition is skewed to polar residues over residues Lys-109–Ser-124 and Glu-133–Leu-143. Phosphoserine is present on residues Ser-116, Ser-122, and Ser-124. A phosphothreonine mark is found at Thr-141, Thr-145, and Thr-153. Phosphoserine occurs at positions 157 and 161. Residue Thr-242 is modified to Phosphothreonine. Position 244 is a phosphoserine (Ser-244). Over residues Gly-257 to Thr-273 the composition is skewed to basic and acidic residues. A compositionally biased stretch (low complexity) spans Gly-285 to Pro-295. Ser-345 carries the post-translational modification Phosphoserine. Polar residues predominate over residues Gln-357 to Thr-367. 3 positions are modified to phosphothreonine: Thr-361, Thr-362, and Thr-363. The residue at position 365 (Ser-365) is a Phosphoserine. Thr-367 carries the post-translational modification Phosphothreonine. S-palmitoyl cysteine attachment occurs at residues Cys-377 and Cys-379. Cys-380 is subject to Cysteine methyl ester. The S-farnesyl cysteine moiety is linked to residue Cys-380. Residues Ser-381–Met-383 constitute a propeptide, removed in mature form.

This sequence belongs to the paralemmin family. In terms of assembly, interacts with dopamine receptor DRD3. As to expression, expression is highest in brain, intermediate in adrenal gland and kidney, and much lower or undetectable in other tissues. Isoform 1 is the predominant isoform in most tissues except brain and kidney where isoform 2 predominates.

Its subcellular location is the cell membrane. It is found in the cell projection. It localises to the filopodium membrane. The protein resides in the axon. The protein localises to the dendrite. Its subcellular location is the dendritic spine. It is found in the basolateral cell membrane. It localises to the apicolateral cell membrane. Functionally, involved in plasma membrane dynamics and cell process formation. Isoform 1 and isoform 2 are necessary for axonal and dendritic filopodia induction, for dendritic spine maturation and synapse formation in a palmitoylation-dependent manner. This is Paralemmin-1 (Palm) from Mus musculus (Mouse).